The primary structure comprises 185 residues: NAD(P)H-dependent FAD/FMN reductase GTNG_3158 (185 aa).

Anthranilate 3-monooxygenase consists of a reductase component (GTNG_3158) and an oxygenase component HpaH.

It catalyses the reaction FADH2 + NAD(+) = FAD + NADH + 2 H(+). The catalysed reaction is FADH2 + NADP(+) = FAD + NADPH + 2 H(+). Functionally, involved in the pathway of tryptophan degradation. Reduces FAD/FMN to FADH(2)/FMNH(2), which are subsequently used for the hydroxylation of anthranilate. It can reduce either FAD or flavin mononucleotide (FMN) but prefers FAD. The enzyme has a slight preference for NADPH as acceptor. This chain is NAD(P)H-dependent FAD/FMN reductase GTNG_3158, found in Geobacillus thermodenitrificans (strain NG80-2).